The chain runs to 183 residues: Pectinesterase inhibitor 8 (183 aa).

The N-terminal stretch at 1–30 is a signal peptide; it reads MAQRASRRPAAAAAAVVVAVVLAVSGGVGA. Intrachain disulfides connect cysteine 36–cysteine 51 and cysteine 107–cysteine 147.

Belongs to the PMEI family.

It is found in the secreted. The protein localises to the extracellular space. Its subcellular location is the apoplast. Its function is as follows. Pectin methylesterase (PME) inhibitor that inhibits PME in vitro. In Oryza sativa subsp. japonica (Rice), this protein is Pectinesterase inhibitor 8.